We begin with the raw amino-acid sequence, 306 residues long: HORMA domain-containing protein 2 (306 aa).

Residues H29–V232 form the HORMA domain.

In terms of assembly, interacts with HORMAD1. Phosphorylated in a SPO11-dependent manner.

It is found in the nucleus. Its subcellular location is the chromosome. In terms of biological role, essential for synapsis surveillance during meiotic prophase via the recruitment of ATR activity. Plays a key role in the male mid-pachytene checkpoint and the female meiotic prophase checkpoint: required for efficient build-up of ATR activity on unsynapsed chromosome regions, a process believed to form the basis of meiotic silencing of unsynapsed chromatin (MSUC) and meiotic prophase quality control in both sexes. Required for the DNA double-strand break-independent, BRCA1-dependent activation of ATR on the sex chromosomes that is essential for normal sex body formation. This is HORMA domain-containing protein 2 (HORMAD2) from Bos taurus (Bovine).